A 92-amino-acid chain; its full sequence is Small ribosomal subunit protein uS19 (92 aa).

This sequence belongs to the universal ribosomal protein uS19 family.

Its function is as follows. Protein S19 forms a complex with S13 that binds strongly to the 16S ribosomal RNA. This chain is Small ribosomal subunit protein uS19 (rpsS), found in Synechocystis sp. (strain ATCC 27184 / PCC 6803 / Kazusa).